The chain runs to 462 residues: Gamma-aminobutyric acid receptor subunit alpha-5 (462 aa).

The signal sequence occupies residues 1–31 (MDNGMFSGFIMIKNLLLFCISMNLSSHFGFS). Residues 32–260 (QMPTSSVKDE…FHLKRKIGYF (229 aa)) are Extracellular-facing. N-linked (GlcNAc...) asparagine glycosylation is present at Asn45. Arg101 lines the 4-aminobutanoate pocket. The N-linked (GlcNAc...) asparagine glycan is linked to Asn145. Thr164 provides a ligand contact to 4-aminobutanoate. Cys173 and Cys187 form a disulfide bridge. N-linked (GlcNAc...) asparagine glycosylation is found at Asn207 and Asn236. A helical membrane pass occupies residues 261 to 281 (VIQTYLPCIMTVILSQVSFWL). The Cytoplasmic segment spans residues 282–286 (NRESV). A helical transmembrane segment spans residues 287-308 (PARTVFGVTTVLTMTTLSISAR). Residues 309–318 (NSLPKVAYAT) are Extracellular-facing. A helical transmembrane segment spans residues 319–340 (AMDWFIAVCYAFVFSALIEFAT). Residues 341–427 (VNYFTKRGWA…TYNSISKIDK (87 aa)) are Cytoplasmic-facing. Residue Lys355 forms a Glycyl lysine isopeptide (Lys-Gly) (interchain with G-Cter in ubiquitin) linkage. The disordered stretch occupies residues 377-412 (FTTGKMSHPPNIPKEQTPAGTSNTTSVSVKPSEEKT). The chain crosses the membrane as a helical span at residues 428–448 (MSRIVFPVLFGTFNLVYWATY). The Extracellular portion of the chain corresponds to 449–462 (LNREPVIKGAASPK).

Belongs to the ligand-gated ion channel (TC 1.A.9) family. Gamma-aminobutyric acid receptor (TC 1.A.9.5) subfamily. GABRA5 sub-subfamily. Heteropentamer, formed by a combination of alpha (GABRA1-6), beta (GABRB1-3), gamma (GABRG1-3), delta (GABRD), epsilon (GABRE), rho (GABRR1-3), pi (GABRP) and theta (GABRQ) chains, each subunit exhibiting distinct physiological and pharmacological properties.

The protein localises to the postsynaptic cell membrane. It is found in the cell membrane. The catalysed reaction is chloride(in) = chloride(out). Functionally, alpha subunit of the heteropentameric ligand-gated chloride channel gated by gamma-aminobutyric acid (GABA), a major inhibitory neurotransmitter in the brain. GABA-gated chloride channels, also named GABA(A) receptors (GABAAR), consist of five subunits arranged around a central pore and contain GABA active binding site(s) located at the alpha and beta subunit interface(s). When activated by GABA, GABAARs selectively allow the flow of chloride anions across the cell membrane down their electrochemical gradient. GABAARs containing alpha-5/GABRA5 subunits are mainly extrasynaptic and contribute to the tonic GABAergic inhibition in the hippocampus. Extrasynaptic alpha-5-containing GABAARs in CA1 pyramidal neurons play a role in learning and memory processes. The chain is Gamma-aminobutyric acid receptor subunit alpha-5 from Homo sapiens (Human).